The sequence spans 1052 residues: Multidrug resistance protein MdtB (1052 aa).

11 helical membrane passes run 15–37, 345–362, 367–389, 396–418, 438–460, 472–494, 535–557, 867–889, 909–931, 968–990, and 1000–1022; these read LFIL…GIIG, FELL…YLFL, ATII…MYFL, LTLM…VIEN, GEIG…PLLF, FAVT…TPMM, HPWL…YLLI, LWLI…ESFI, LMLT…IGIV, ILMT…GVGA, and MVGG…YLLF. The tract at residues 1032-1052 is disordered; the sequence is KNRHRDEDIDSSELLNGQEPQ.

It belongs to the resistance-nodulation-cell division (RND) (TC 2.A.6) family. MdtB subfamily. As to quaternary structure, part of a tripartite efflux system composed of MdtA, MdtB and MdtC. MdtB forms a heteromultimer with MdtC.

It localises to the cell inner membrane. In Yersinia pseudotuberculosis serotype I (strain IP32953), this protein is Multidrug resistance protein MdtB.